The sequence spans 1287 residues: DENN domain-containing protein 5A (1287 aa).

Positions 57–259 (STTEGENFEQ…EVPLPPPGRS (203 aa)) constitute a uDENN domain. At serine 193 the chain carries Phosphoserine. A cDENN domain is found at 278–414 (ELPLFDFPVK…LEFVQEVSEI (137 aa)). One can recognise a dDENN domain in the interval 416 to 598 (MAFGVPPEGN…IMCHDDDDKD (183 aa)). Residues 787 to 950 (VEENTLIASL…DYFCFTNVFT (164 aa)) enclose the RUN 1 domain. A PLAT domain is found at 954–1062 (IPYHILIVPS…DDGSLERVLV (109 aa)). Threonine 1079 carries the post-translational modification Phosphothreonine. Phosphoserine occurs at positions 1085, 1087, and 1096. The RUN 2 domain occupies 1134 to 1280 (TLLLCGECGL…QEFNITLDTS (147 aa)).

It belongs to the RAB6IP1 family. As to quaternary structure, interacts with RAB6A bound to GTP.

It localises to the golgi apparatus membrane. Its function is as follows. Guanine nucleotide exchange factor (GEF) which may activate RAB6A and RAB39A and/or RAB39B. Promotes the exchange of GDP to GTP, converting inactive GDP-bound Rab proteins into their active GTP-bound form. Involved in the negative regulation of neurite outgrowth. The polypeptide is DENN domain-containing protein 5A (Dennd5a) (Mus musculus (Mouse)).